We begin with the raw amino-acid sequence, 332 residues long: Probable L-asparaginase (332 aa).

An Asparaginase/glutaminase domain is found at P6–Y332. T16 (O-isoaspartyl threonine intermediate) is an active-site residue. Residues S62 and T95–D96 each bind substrate.

This sequence belongs to the asparaginase 1 family.

Its subcellular location is the cytoplasm. The catalysed reaction is L-asparagine + H2O = L-aspartate + NH4(+). The sequence is that of Probable L-asparaginase (ansA) from Helicobacter pylori (strain J99 / ATCC 700824) (Campylobacter pylori J99).